Consider the following 706-residue polypeptide: Polyribonucleotide nucleotidyltransferase (706 aa).

The Mg(2+) site is built by aspartate 487 and aspartate 493. The KH domain maps to 554 to 613 (PRIHTMKISSDKIKDVIGKGGAVIRALCEETGTTIEIEDDGTIKIAATEGAAAKEAIRRI). The S1 motif domain maps to 623–691 (GRIYQGKVAR…RQGRVRLSMK (69 aa)).

The protein belongs to the polyribonucleotide nucleotidyltransferase family. As to quaternary structure, component of the RNA degradosome, which is a multiprotein complex involved in RNA processing and mRNA degradation. It depends on Mg(2+) as a cofactor.

The protein localises to the cytoplasm. The catalysed reaction is RNA(n+1) + phosphate = RNA(n) + a ribonucleoside 5'-diphosphate. Involved in mRNA degradation. Catalyzes the phosphorolysis of single-stranded polyribonucleotides processively in the 3'- to 5'-direction. In Vibrio atlanticus (strain LGP32) (Vibrio splendidus (strain Mel32)), this protein is Polyribonucleotide nucleotidyltransferase.